We begin with the raw amino-acid sequence, 339 residues long: Anthranilate phosphoribosyltransferase (339 aa).

Residues glycine 79, 82 to 83, serine 87, 89 to 92, 107 to 115, and alanine 119 each bind 5-phospho-alpha-D-ribose 1-diphosphate; these read GD, NIST, and KHGNRAASS. Glycine 79 lines the anthranilate pocket. Serine 91 serves as a coordination point for Mg(2+). Residue asparagine 110 participates in anthranilate binding. Arginine 165 provides a ligand contact to anthranilate. 2 residues coordinate Mg(2+): aspartate 224 and glutamate 225.

Belongs to the anthranilate phosphoribosyltransferase family. As to quaternary structure, homodimer. It depends on Mg(2+) as a cofactor.

The catalysed reaction is N-(5-phospho-beta-D-ribosyl)anthranilate + diphosphate = 5-phospho-alpha-D-ribose 1-diphosphate + anthranilate. It functions in the pathway amino-acid biosynthesis; L-tryptophan biosynthesis; L-tryptophan from chorismate: step 2/5. Catalyzes the transfer of the phosphoribosyl group of 5-phosphorylribose-1-pyrophosphate (PRPP) to anthranilate to yield N-(5'-phosphoribosyl)-anthranilate (PRA). The protein is Anthranilate phosphoribosyltransferase of Lactiplantibacillus plantarum (strain ATCC BAA-793 / NCIMB 8826 / WCFS1) (Lactobacillus plantarum).